Reading from the N-terminus, the 216-residue chain is Pathogenicity-related ORF2 (216 aa).

The next 4 helical transmembrane spans lie at 6–26 (VGSL…AAMV), 55–75 (LNGV…MEAF), 157–177 (IGFL…NALM), and 193–213 (FKLL…GLVL).

It belongs to the FliP/MopC/SpaP family.

It is found in the cell membrane. Its function is as follows. Important for pathogenicity. The sequence is that of Pathogenicity-related ORF2 from Xanthomonas campestris pv. glycines.